The sequence spans 195 residues: Proteasome subunit beta 1 (195 aa).

Residues 1-6 (MEELPA) constitute a propeptide, removed in mature form; by autocatalysis. Thr-7 acts as the Nucleophile in catalysis.

This sequence belongs to the peptidase T1B family. As to quaternary structure, the 20S proteasome core is composed of 14 alpha and 14 beta subunits that assemble into four stacked heptameric rings, resulting in a barrel-shaped structure. The two inner rings, each composed of seven catalytic beta subunits, are sandwiched by two outer rings, each composed of seven alpha subunits. The catalytic chamber with the active sites is on the inside of the barrel. Has a gated structure, the ends of the cylinder being occluded by the N-termini of the alpha-subunits. Is capped at one or both ends by the proteasome regulatory ATPase, PAN.

The protein resides in the cytoplasm. The catalysed reaction is Cleavage of peptide bonds with very broad specificity.. With respect to regulation, the formation of the proteasomal ATPase PAN-20S proteasome complex, via the docking of the C-termini of PAN into the intersubunit pockets in the alpha-rings, triggers opening of the gate for substrate entry. Interconversion between the open-gate and close-gate conformations leads to a dynamic regulation of the 20S proteasome proteolysis activity. Functionally, component of the proteasome core, a large protease complex with broad specificity involved in protein degradation. This is Proteasome subunit beta 1 from Sulfolobus acidocaldarius (strain ATCC 33909 / DSM 639 / JCM 8929 / NBRC 15157 / NCIMB 11770).